Here is a 385-residue protein sequence, read N- to C-terminus: Polyketide synthase 4 (385 aa).

Cys157 is a catalytic residue.

This sequence belongs to the thiolase-like superfamily. Chalcone/stilbene synthases family. In terms of tissue distribution, expressed in glandular trichomes.

It is found in the cytoplasm. Its function is as follows. Polyketide synthase responsible for the biosynthesis of secondary metabolites. In Cannabis sativa (Hemp), this protein is Polyketide synthase 4 (PKSG4).